Consider the following 571-residue polypeptide: Proline--tRNA ligase (571 aa).

This sequence belongs to the class-II aminoacyl-tRNA synthetase family. ProS type 1 subfamily. Homodimer.

Its subcellular location is the cytoplasm. The enzyme catalyses tRNA(Pro) + L-proline + ATP = L-prolyl-tRNA(Pro) + AMP + diphosphate. Catalyzes the attachment of proline to tRNA(Pro) in a two-step reaction: proline is first activated by ATP to form Pro-AMP and then transferred to the acceptor end of tRNA(Pro). As ProRS can inadvertently accommodate and process non-cognate amino acids such as alanine and cysteine, to avoid such errors it has two additional distinct editing activities against alanine. One activity is designated as 'pretransfer' editing and involves the tRNA(Pro)-independent hydrolysis of activated Ala-AMP. The other activity is designated 'posttransfer' editing and involves deacylation of mischarged Ala-tRNA(Pro). The misacylated Cys-tRNA(Pro) is not edited by ProRS. The protein is Proline--tRNA ligase of Pediococcus pentosaceus (strain ATCC 25745 / CCUG 21536 / LMG 10740 / 183-1w).